Consider the following 525-residue polypeptide: GMP synthase [glutamine-hydrolyzing] (525 aa).

The 190-residue stretch at 16-205 (PVLVVDFGAQ…LHDFAGLGAQ (190 aa)) folds into the Glutamine amidotransferase type-1 domain. Residue C93 is the Nucleophile of the active site. Residues H179 and E181 contribute to the active site. A GMPS ATP-PPase domain is found at 206–399 (WTPANIANAL…LGLPEEIVAR (194 aa)). 233-239 (SGGVDSA) is a binding site for ATP.

Homodimer.

It carries out the reaction XMP + L-glutamine + ATP + H2O = GMP + L-glutamate + AMP + diphosphate + 2 H(+). Its pathway is purine metabolism; GMP biosynthesis; GMP from XMP (L-Gln route): step 1/1. In terms of biological role, catalyzes the synthesis of GMP from XMP. The protein is GMP synthase [glutamine-hydrolyzing] of Mycobacterium bovis (strain BCG / Pasteur 1173P2).